The primary structure comprises 285 residues: Tetraspanin-3 (285 aa).

At 1–6 (MRTSNH) the chain is on the cytoplasmic side. The helical transmembrane segment at 7 to 27 (LIGLVNFLTFLLSIPILGGGI) threads the bilayer. Over 28–43 (WLSSRANSTDCLRFLQ) the chain is Extracellular. Asn34 is a glycosylation site (N-linked (GlcNAc...) asparagine). The chain crosses the membrane as a helical span at residues 44–64 (WPLIVIGISIMVVSLAGFAGA). The Cytoplasmic segment spans residues 65–71 (CYRNKFL). The chain crosses the membrane as a helical span at residues 72–92 (MWLYLVVMLLIIAALIGFIIF). Residues 93-235 (AYAVTDKGSG…LGSLKKSWRK (143 aa)) are Extracellular-facing. A glycan (N-linked (GlcNAc...) asparagine) is linked at Asn187. A helical transmembrane segment spans residues 236–256 (VSVINIVVLIILVIFYVIAYA). At 257–285 (AYRNVKRIDNDEPAGEARMTKSHPSHFHL) the chain is on the cytoplasmic side.

The protein belongs to the tetraspanin (TM4SF) family.

It is found in the cell membrane. Its function is as follows. May be involved in the regulation of cell differentiation. The polypeptide is Tetraspanin-3 (TET3) (Arabidopsis thaliana (Mouse-ear cress)).